We begin with the raw amino-acid sequence, 488 residues long: Bifunctional pantoate ligase/cytidylate kinase (488 aa).

1–8 (MGALHRAH) provides a ligand contact to ATP. The tract at residues 1–251 (MGALHRAHGQ…CGETRLIDHT (251 aa)) is pantoate--beta-alanine ligase. Catalysis depends on H8, which acts as the Proton donor. Position 36 (Q36) interacts with (R)-pantoate. Q36 contributes to the beta-alanine binding site. 125-128 (GEKD) provides a ligand contact to ATP. Q131 lines the (R)-pantoate pocket. Residues V154 and 162-165 (CSSR) contribute to the ATP site. The segment at 252–488 (FLMSRQPIVA…PEEVWPTPGS (237 aa)) is cytidylate kinase.

This sequence in the N-terminal section; belongs to the pantothenate synthetase family. The protein in the C-terminal section; belongs to the cytidylate kinase family. Type 1 subfamily.

It localises to the cytoplasm. It carries out the reaction (R)-pantoate + beta-alanine + ATP = (R)-pantothenate + AMP + diphosphate + H(+). The catalysed reaction is CMP + ATP = CDP + ADP. The enzyme catalyses dCMP + ATP = dCDP + ADP. It functions in the pathway cofactor biosynthesis; (R)-pantothenate biosynthesis; (R)-pantothenate from (R)-pantoate and beta-alanine: step 1/1. Functionally, catalyzes the condensation of pantoate with beta-alanine in an ATP-dependent reaction via a pantoyl-adenylate intermediate. In terms of biological role, catalyzes the transfer of a phosphate group from ATP to either CMP or dCMP to form CDP or dCDP and ADP, respectively. The polypeptide is Bifunctional pantoate ligase/cytidylate kinase (Prochlorococcus marinus (strain MIT 9303)).